The chain runs to 213 residues: E3 ubiquitin-protein ligase NleG8 (213 aa).

An RING/U-box domain region spans residues 136 to 189; sequence CPITLCVPETGVFVKNARCSKVCSLYDISALTEMLRRNASHPLSREAFTPGMIV. The PDZ-binding motif motif lies at 211–213; the sequence is TRL.

This sequence belongs to the NleG E3 ligase family. As to quaternary structure, interacts with host GOPC (human protein).

It is found in the secreted. It localises to the host cytoplasm. It carries out the reaction S-ubiquitinyl-[E2 ubiquitin-conjugating enzyme]-L-cysteine + [acceptor protein]-L-lysine = [E2 ubiquitin-conjugating enzyme]-L-cysteine + N(6)-ubiquitinyl-[acceptor protein]-L-lysine.. In terms of biological role, effector proteins function to alter host cell physiology and promote bacterial survival in host tissues. This protein is an E3 ubiquitin-protein ligase that probably interferes with the host's ubiquitination pathway and targets host proteins for proteasomal degradation. Mice infected with a strain of bacteria deleted for this gene had an increased survival rate. Can be ubiquitinylated, and ubiquitinate ubiquitin, giving rise to polyubiquitin chains (in vitro). The protein is E3 ubiquitin-protein ligase NleG8 of Citrobacter rodentium.